The sequence spans 200 residues: Holliday junction resolvase RecU (200 aa).

The segment at 1–25 (MTIRYPNGKRYNQASQPHKTPIKKH) is disordered. The Mg(2+) site is built by Thr85, Asp87, Glu100, and Gln119.

It belongs to the RecU family. Mg(2+) serves as cofactor.

Its subcellular location is the cytoplasm. The catalysed reaction is Endonucleolytic cleavage at a junction such as a reciprocal single-stranded crossover between two homologous DNA duplexes (Holliday junction).. In terms of biological role, endonuclease that resolves Holliday junction intermediates in genetic recombination. Cleaves mobile four-strand junctions by introducing symmetrical nicks in paired strands. Promotes annealing of linear ssDNA with homologous dsDNA. Required for DNA repair, homologous recombination and chromosome segregation. This is Holliday junction resolvase RecU from Bacillus cereus (strain ZK / E33L).